We begin with the raw amino-acid sequence, 250 residues long: 3-deoxy-manno-octulosonate cytidylyltransferase (250 aa).

It belongs to the KdsB family.

It localises to the cytoplasm. The enzyme catalyses 3-deoxy-alpha-D-manno-oct-2-ulosonate + CTP = CMP-3-deoxy-beta-D-manno-octulosonate + diphosphate. It participates in nucleotide-sugar biosynthesis; CMP-3-deoxy-D-manno-octulosonate biosynthesis; CMP-3-deoxy-D-manno-octulosonate from 3-deoxy-D-manno-octulosonate and CTP: step 1/1. It functions in the pathway bacterial outer membrane biogenesis; lipopolysaccharide biosynthesis. In terms of biological role, activates KDO (a required 8-carbon sugar) for incorporation into bacterial lipopolysaccharide in Gram-negative bacteria. The sequence is that of 3-deoxy-manno-octulosonate cytidylyltransferase from Yersinia enterocolitica serotype O:8 / biotype 1B (strain NCTC 13174 / 8081).